Here is a 370-residue protein sequence, read N- to C-terminus: Sphingolipid delta(4)-desaturase (370 aa).

The next 3 membrane-spanning stretches (helical) occupy residues 68–88, 92–112, and 128–148; these read VMGVVLLQLGIAYYLRHTPVF, FLTLAYVIGATANQAIFLAIH, and LFAVFANIPIGVPYSASFQPY. A Histidine box-1 motif is present at residues 112–116; sequence HELSH. Positions 149-153 match the Histidine box-2 motif; that stretch reads HQLHH. The next 3 membrane-spanning stretches (helical) occupy residues 173-193, 197-217, and 220-240; these read FLSSMPGKLFFAIFQIFFYAL, FITQIKFTYVHLVNVVFQLIF, and VMVTCWGWKALGYFIVSTFLA. Positions 299-303 match the Histidine box-3 motif; sequence HNEHH.

It belongs to the fatty acid desaturase type 1 family. DEGS subfamily.

The protein resides in the membrane. It carries out the reaction an N-acylsphinganine + 2 Fe(II)-[cytochrome b5] + O2 + 2 H(+) = an N-acylsphing-4-enine + 2 Fe(III)-[cytochrome b5] + 2 H2O. It participates in lipid metabolism; sphingolipid metabolism. In terms of biological role, delta(4)-fatty-acid desaturase which introduces a double bond at the 4-position in the long-chain base (LCB) of ceramides. Required for the formation of the monounsaturated sphingoid base (E)-sphing-4-enine during glucosylceramide (GluCer) biosynthesis. This Candida albicans (strain SC5314 / ATCC MYA-2876) (Yeast) protein is Sphingolipid delta(4)-desaturase.